Here is a 336-residue protein sequence, read N- to C-terminus: MSFLSKNGAGILACLLISILSWYLGGFFPVIGAPVFAIFIGMLLHPFLSSYKQLDAGLTFSSKKLLQYAVVLLGFGLNISQVFAVGQSSLPVILSTISIALIIAYLFQRFFALDTKLATLVGVGSSICGGSAIAATAPVIHAKEKEVAQAISVIFFFNVLAALIFPTLGTWLHLSNEGFALFAGTAVNDTSSVTAAASAWDSLYQSNTLESATIVKLTRTLAIIPITLFLSYWQSRQQENKQSLQLKKVFPLFILYFILASLLTTLLTSLGVSSSFFTPLKQLSKFLIVMAMSAIGLKTNLVAMVKSSGKSILLGAICWIAIILTTLGMQTLIGIF.

A run of 8 helical transmembrane segments spans residues 65–84, 91–113, 118–140, 153–175, 211–233, 249–271, 286–305, and 312–334; these read LLQY…QVFA, PVIL…FFAL, ATLV…APVI, VIFF…LHLS, SATI…LSYW, VFPL…TSLG, FLIV…VAMV, and ILLG…TLIG.

It belongs to the UPF0324 family.

Its subcellular location is the cell membrane. The chain is UPF0324 membrane protein spr0034 from Streptococcus pneumoniae (strain ATCC BAA-255 / R6).